The following is a 307-amino-acid chain: Fructose-bisphosphate aldolase (307 aa).

Ser49 is a D-glyceraldehyde 3-phosphate binding site. Catalysis depends on Asp82, which acts as the Proton donor. Positions 83, 104, 134, and 180 each coordinate Zn(2+). Gly181 lines the dihydroxyacetone phosphate pocket. Residue His210 coordinates Zn(2+). Residues 211–213 (GAS) and 253–256 (NTDT) contribute to the dihydroxyacetone phosphate site.

It belongs to the class II fructose-bisphosphate aldolase family. As to quaternary structure, homodimer. The cofactor is Zn(2+).

The enzyme catalyses beta-D-fructose 1,6-bisphosphate = D-glyceraldehyde 3-phosphate + dihydroxyacetone phosphate. It functions in the pathway carbohydrate degradation; glycolysis; D-glyceraldehyde 3-phosphate and glycerone phosphate from D-glucose: step 4/4. Its function is as follows. Catalyzes the aldol condensation of dihydroxyacetone phosphate (DHAP or glycerone-phosphate) with glyceraldehyde 3-phosphate (G3P) to form fructose 1,6-bisphosphate (FBP) in gluconeogenesis and the reverse reaction in glycolysis. This chain is Fructose-bisphosphate aldolase (fba), found in Helicobacter pylori (strain ATCC 700392 / 26695) (Campylobacter pylori).